We begin with the raw amino-acid sequence, 312 residues long: Transcriptional regulator protein Pur-beta (312 aa).

A disordered region spans residues 1–32 (MADGDSGSERGGGGGPCGFQPASRGGGEQETQ). A2 carries the post-translational modification N-acetylalanine. S6 and S8 each carry phosphoserine. R24 carries the post-translational modification Omega-N-methylarginine. Positions 28-254 (EQETQELASK…LRVSEVKPSY (227 aa)) are DNA-binding. A Phosphothreonine modification is found at T31. S101 carries the post-translational modification Phosphoserine. Omega-N-methylarginine is present on R152. An N6-acetyllysine modification is found at K267. Positions 284–295 (ERQRDKLYERRG) are enriched in basic and acidic residues. The disordered stretch occupies residues 284–312 (ERQRDKLYERRGGGSGGGEESEGEEVDED). An Omega-N-methylarginine modification is found at R294. S298 and S304 each carry phosphoserine. The span at 302–312 (EESEGEEVDED) shows a compositional bias: acidic residues.

This sequence belongs to the PUR DNA-binding protein family. Homodimer, heterodimer with PURA and heterotrimer with PURA and YBX1/Y-box protein 1. Interacts with MYOCD and SRF. As to expression, expressed in myocardium of heart failure patients.

It localises to the nucleus. Transcriptional regulator which can act as an activator or a repressor. Represses the transcription of ACTA2 in fibroblasts and smooth muscle cells via its ability to interact with the purine-rich strand of a MCAT- containing element in the 5' flanking region of the gene. Represses the transcription of MYOCD, capable of repressing all isoforms of MYOCD but the magnitude of the repressive effects is most notable for the SMC- specific isoforms. Promotes hepatic glucose production by activating the transcription of ADCY6, leading to cAMP accumulation, increased PKA activity, CREB activation, and increased transcription of PCK1 and G6PC genes. Has capacity to bind repeated elements in single-stranded DNA such as the purine-rich single strand of the PUR element located upstream of the MYC gene. Participates in transcriptional and translational regulation of alpha-MHC expression in cardiac myocytes by binding to the purine-rich negative regulatory (PNR) element Modulates constitutive liver galectin-3 gene transcription by binding to its promoter. May play a role in the dendritic transport of a subset of mRNAs. The polypeptide is Transcriptional regulator protein Pur-beta (PURB) (Homo sapiens (Human)).